Here is a 195-residue protein sequence, read N- to C-terminus: Penicillin-binding protein activator LpoB (195 aa).

The N-terminal stretch at 1 to 16 is a signal peptide; sequence MKKYLFVALAALVLTG. C17 carries the N-palmitoyl cysteine lipid modification. C17 is lipidated: S-diacylglycerol cysteine. The disordered stretch occupies residues 19–55; sequence SRPPEPEQPQPPVTVEPVTPPVVEEPQPPVTEPVPQP. 2 stretches are compositionally biased toward pro residues: residues 24-38 and 44-55; these read PEQPQPPVTVEPVTP and PQPPVTEPVPQP.

It belongs to the LpoB family. As to quaternary structure, interacts with PBP1b.

It localises to the cell outer membrane. Regulator of peptidoglycan synthesis that is essential for the function of penicillin-binding protein 1B (PBP1b). This Serratia proteamaculans (strain 568) protein is Penicillin-binding protein activator LpoB.